Reading from the N-terminus, the 169-residue chain is Oleosin Cor a 15 (169 aa).

Helical transmembrane passes span 38-58 (IAVVTLLPLGGFLLLLAGLTF) and 70-90 (PLFVLCSPVLVPAAIVIGLAV). The Proline-knot motif lies at 70–81 (PLFVLCSPVLVP). 2 stretches are compositionally biased toward basic and acidic residues: residues 122–131 (QMEHAKRRAQ) and 160–169 (EGGRGEEKKT). The interval 122–169 (QMEHAKRRAQDTAGHLGQKARETGQTVTGKGQEAGKTLEGGRGEEKKT) is disordered.

Belongs to the oleosin family. In terms of tissue distribution, expressed in seeds (at protein level).

It localises to the lipid droplet. Its subcellular location is the membrane. May have a structural role to stabilize the lipid body during desiccation of the seed by preventing coalescence of the oil. Probably interacts with both lipid and phospholipid moieties of lipid bodies. May also provide recognition signals for specific lipase anchorage in lipolysis during seedling growth. In Corylus avellana (European hazel), this protein is Oleosin Cor a 15.